A 297-amino-acid chain; its full sequence is ClpXP adapter protein SpxH (297 aa).

The protein belongs to the SpxH family. As to quaternary structure, interacts with Spx.

The protein localises to the cytoplasm. Adapter protein required for efficient degradation of Spx by ClpXP under non-stress conditions. Interaction with Spx stabilizes Spx and exposes the C-terminus of Spx for recognition and proteolysis by ClpXP. This is ClpXP adapter protein SpxH from Bacillus thuringiensis subsp. konkukian (strain 97-27).